A 1634-amino-acid chain; its full sequence is Phosphatidylinositol 4-phosphate 3-kinase C2 domain-containing subunit beta (1634 aa).

The segment at 2 to 298 is interaction with GRB2; that stretch reads SSTQGNGEHW…YASRYGNRKN (297 aa). 2 disordered regions span residues 45-188 and 259-315; these read EENR…QPSD and GRGP…VGSR. Residues 87–112 show a composition bias toward polar residues; it reads SDPTLNYNSLSPQEGPPNHSTSQGPQ. Residues 176–187 are compositionally biased toward low complexity; the sequence is GSPSSSKISQPS. A compositionally biased stretch (basic and acidic residues) spans 259 to 270; the sequence is GRGPLDFSKDTS. The 89-residue stretch at 375–463 folds into the PI3K-RBD domain; sequence EVNLKVTVLC…DIDIRLQLME (89 aa). Positions 635-786 constitute a C2 PI3K-type domain; it reads VYATHRIPII…DSVILQIDFP (152 aa). Residues 805–981 enclose the PIK helical domain; sequence RYEFGSLREE…QYLLAALLCC (177 aa). One can recognise a PI3K/PI4K catalytic domain in the interval 1050-1328; that stretch reads VPRDCSYFNS…LIESSLGSVA (279 aa). Residues 1056-1062 are G-loop; sequence YFNSNAV. The tract at residues 1192–1200 is catalytic loop; sequence GICDRHNDN. The interval 1211–1237 is activation loop; that stretch reads HIDFGRFLGHAQMFGNIKRDRAPFVFT. In terms of domain architecture, PX spans 1365–1481; it reads GRISDVFLCR…TFFHPLPRDE (117 aa). In terms of domain architecture, C2 spans 1504-1624; the sequence is VGGEVKLSIS…DLAQEKTGWF (121 aa).

It belongs to the PI3/PI4-kinase family. Part of a complex with ERBB2 and EGFR. Part of a complex with phosphorylated EGFR and GRB2. Interacts with phosphorylated EGFR and PDGFR, maybe indirectly. Interacts with GRB2. The cofactor is Ca(2+). Requires Mg(2+) as cofactor. It depends on Mn(2+) as a cofactor. As to expression, expressed in columnar and transitional epithelia, mononuclear cells, and ganglion cells (at protein level). Widely expressed, with highest levels in thymus and placenta and lowest in peripheral blood, skeletal muscle and kidney.

It localises to the microsome. The protein resides in the cell membrane. It is found in the cytoplasm. Its subcellular location is the cytosol. The protein localises to the nucleus. It localises to the endoplasmic reticulum. It catalyses the reaction a 1,2-diacyl-sn-glycero-3-phospho-(1D-myo-inositol 4-phosphate) + ATP = a 1,2-diacyl-sn-glycero-3-phospho-(1D-myo-inositol-3,4-bisphosphate) + ADP + H(+). The enzyme catalyses a 1,2-diacyl-sn-glycero-3-phospho-(1D-myo-inositol) + ATP = a 1,2-diacyl-sn-glycero-3-phospho-(1D-myo-inositol-3-phosphate) + ADP + H(+). Its activity is regulated as follows. Activated by GRB2. In terms of biological role, phosphorylates PtdIns and PtdIns4P with a preference for PtdIns. Does not phosphorylate PtdIns(4,5)P2. May be involved in EGF and PDGF signaling cascades. The protein is Phosphatidylinositol 4-phosphate 3-kinase C2 domain-containing subunit beta (PIK3C2B) of Homo sapiens (Human).